We begin with the raw amino-acid sequence, 130 residues long: Small ribosomal subunit protein uS8A (130 aa).

Belongs to the universal ribosomal protein uS8 family. As to quaternary structure, component of the small ribosomal subunit (SSU). Mature ribosomes consist of a small (40S) and a large (60S) subunit. The 40S subunit contains about 32 different proteins and 1 molecule of RNA (18S). The 60S subunit contains 45 different proteins and 3 molecules of RNA (25S, 5.8S and 5S).

The protein localises to the cytoplasm. Functionally, component of the ribosome, a large ribonucleoprotein complex responsible for the synthesis of proteins in the cell. The small ribosomal subunit (SSU) binds messenger RNAs (mRNAs) and translates the encoded message by selecting cognate aminoacyl-transfer RNA (tRNA) molecules. The large subunit (LSU) contains the ribosomal catalytic site termed the peptidyl transferase center (PTC), which catalyzes the formation of peptide bonds, thereby polymerizing the amino acids delivered by tRNAs into a polypeptide chain. The nascent polypeptides leave the ribosome through a tunnel in the LSU and interact with protein factors that function in enzymatic processing, targeting, and the membrane insertion of nascent chains at the exit of the ribosomal tunnel. This Candida albicans (strain SC5314 / ATCC MYA-2876) (Yeast) protein is Small ribosomal subunit protein uS8A (RPS22A).